The sequence spans 79 residues: Acyl carrier protein (79 aa).

The Carrier domain occupies 2-77 (SEIGERVKKI…DATKFLEKNA (76 aa)). O-(pantetheine 4'-phosphoryl)serine is present on S37.

It belongs to the acyl carrier protein (ACP) family. Post-translationally, 4'-phosphopantetheine is transferred from CoA to a specific serine of apo-ACP by AcpS. This modification is essential for activity because fatty acids are bound in thioester linkage to the sulfhydryl of the prosthetic group.

It localises to the cytoplasm. Its pathway is lipid metabolism; fatty acid biosynthesis. In terms of biological role, carrier of the growing fatty acid chain in fatty acid biosynthesis. The protein is Acyl carrier protein of Nitrobacter winogradskyi (strain ATCC 25391 / DSM 10237 / CIP 104748 / NCIMB 11846 / Nb-255).